The primary structure comprises 280 residues: Shikimate dehydrogenase (NADP(+)) (280 aa).

Residues 20–22 (SLS) and threonine 67 each bind shikimate. Lysine 71 acts as the Proton acceptor in catalysis. Glutamate 83 is a binding site for NADP(+). Positions 92 and 107 each coordinate shikimate. NADP(+) is bound by residues 131–135 (GAGGA), 155–160 (NRTLNK), and leucine 224. Tyrosine 226 serves as a coordination point for shikimate. Glycine 247 provides a ligand contact to NADP(+).

This sequence belongs to the shikimate dehydrogenase family. As to quaternary structure, homodimer.

It catalyses the reaction shikimate + NADP(+) = 3-dehydroshikimate + NADPH + H(+). The protein operates within metabolic intermediate biosynthesis; chorismate biosynthesis; chorismate from D-erythrose 4-phosphate and phosphoenolpyruvate: step 4/7. Functionally, involved in the biosynthesis of the chorismate, which leads to the biosynthesis of aromatic amino acids. Catalyzes the reversible NADPH linked reduction of 3-dehydroshikimate (DHSA) to yield shikimate (SA). This is Shikimate dehydrogenase (NADP(+)) from Caldanaerobacter subterraneus subsp. tengcongensis (strain DSM 15242 / JCM 11007 / NBRC 100824 / MB4) (Thermoanaerobacter tengcongensis).